The chain runs to 601 residues: Glutamyl-tRNA(Gln) amidotransferase subunit B, mitochondrial (601 aa).

Residues 1-55 constitute a mitochondrion transit peptide; the sequence is MLRPWLRQCPRATRSLACPQCHLPRPQTARRALRPLPALSLSHPIRSLQTTTTES.

This sequence belongs to the GatB/GatE family. GatB subfamily. As to quaternary structure, subunit of the heterotrimeric GatCAB amidotransferase (AdT) complex, composed of A, B and C subunits.

Its subcellular location is the mitochondrion. It catalyses the reaction L-glutamyl-tRNA(Gln) + L-glutamine + ATP + H2O = L-glutaminyl-tRNA(Gln) + L-glutamate + ADP + phosphate + H(+). Functionally, allows the formation of correctly charged Gln-tRNA(Gln) through the transamidation of misacylated Glu-tRNA(Gln) in the mitochondria. The reaction takes place in the presence of glutamine and ATP through an activated gamma-phospho-Glu-tRNA(Gln). The polypeptide is Glutamyl-tRNA(Gln) amidotransferase subunit B, mitochondrial (Aspergillus niger (strain ATCC MYA-4892 / CBS 513.88 / FGSC A1513)).